The sequence spans 399 residues: Large envelope protein (399 aa).

N-acetylmethionine is present on Met-1. The N-myristoyl glycine; by host moiety is linked to residue Gly-2. The interval 2–118 (GLSWTVPLEW…PPLRDTHPQA (117 aa)) is pre-S1. Positions 2–173 (GLSWTVPLEW…FSRIGDPAPN (172 aa)) are pre-S. The Virion surface; in external conformation segment spans residues 2–180 (GLSWTVPLEW…APNMEGITSG (179 aa)). The Intravirion; in internal conformation segment spans residues 2 to 252 (GLSWTVPLEW…PGYRWMCLRR (251 aa)). Ser-4 carries N-linked (GlcNAc...) asparagine glycosylation. Positions 85–109 (KTLPADPPPASTNRQSGRQPTPITP) are disordered. The segment covering 95–105 (STNRQSGRQPT) has biased composition (polar residues). The interval 119–173 (MQWNSTTFHQALQDPRVRGLYFPAGGSSSGTVNPVPTTASLISSIFSRIGDPAPN) is pre-S2. The chain crosses the membrane as a helical span at residues 181-201 (FLGPLLVLQAGFFLLTKILTI). The Intravirion; in external conformation segment spans residues 202 to 252 (PQSLDSWWTSLNFLGGAPVCLGQNSQSPTSNHSPTSCPPICPGYRWMCLRR). Residues 253 to 273 (FIIFLFILLLCLIFLLVLLGY) traverse the membrane as a helical segment. Topologically, residues 274–347 (QGMLPVCPLI…WASARFSWLS (74 aa)) are virion surface. N-linked (GlcNAc...) asparagine; by host glycosylation occurs at Asn-319. The helical transmembrane segment at 348–368 (LLVPFVQWFAGLSPTVWLSVI) threads the bilayer. Residues 369–374 (WMMWYW) are Intravirion-facing. The helical transmembrane segment at 375 to 397 (GPSLYNILSPFIPLLPIFFCLWV) threads the bilayer. The Virion surface segment spans residues 398–399 (YI).

It belongs to the orthohepadnavirus major surface antigen family. As to quaternary structure, in its internal form (Li-HBsAg), interacts with the capsid protein and with the isoform S. Interacts with host chaperone CANX. In terms of assembly, associates with host chaperone CANX through its pre-S2 N glycan; this association may be essential for isoform M proper secretion. Interacts with isoform L. Interacts with the antigens of satellite virus HDV (HDVAgs); this interaction is required for encapsidation of HDV genomic RNA. Isoform M is N-terminally acetylated by host at a ratio of 90%, and N-glycosylated by host at the pre-S2 region. Post-translationally, myristoylated.

The protein localises to the virion membrane. In terms of biological role, the large envelope protein exists in two topological conformations, one which is termed 'external' or Le-HBsAg and the other 'internal' or Li-HBsAg. In its external conformation the protein attaches the virus to cell receptors and thereby initiating infection. This interaction determines the species specificity and liver tropism. This attachment induces virion internalization predominantly through caveolin-mediated endocytosis. The large envelope protein also assures fusion between virion membrane and endosomal membrane. In its internal conformation the protein plays a role in virion morphogenesis and mediates the contact with the nucleocapsid like a matrix protein. Its function is as follows. The middle envelope protein plays an important role in the budding of the virion. It is involved in the induction of budding in a nucleocapsid independent way. In this process the majority of envelope proteins bud to form subviral lipoprotein particles of 22 nm of diameter that do not contain a nucleocapsid. This is Large envelope protein from Hepatitis B virus genotype E (isolate Cote d'Ivoire/ABI-129/2003) (HBV-E).